The following is a 190-amino-acid chain: Histone H5 (190 aa).

The segment at 1–29 (MTESLVLSPAPAKPKRVKASRRSASHPTY) is disordered. Residues 13–24 (KPKRVKASRRSA) show a composition bias toward basic residues. Phosphoserine is present on residues S23, S30, S146, and S167. One can recognise an H15 domain in the interval 25-98 (SHPTYSEMIA…GASGSFRLAK (74 aa)). The disordered stretch occupies residues 87-190 (GVGASGSFRL…SGARKSPKKK (104 aa)). Positions 104–190 (RSPGKKKKAV…SGARKSPKKK (87 aa)) are enriched in basic residues.

This sequence belongs to the histone H1/H5 family. Erythroid cells.

Its subcellular location is the nucleus. The protein resides in the chromosome. In terms of biological role, histone H5 performs the same function as H1, being necessary for the condensation of nucleosome chains into higher order structures, and replaces histone H1 in certain cells. This chain is Histone H5, found in Gallus gallus (Chicken).